The following is a 151-amino-acid chain: Small ribosomal subunit protein uS15 (151 aa).

It belongs to the universal ribosomal protein uS15 family.

This is Small ribosomal subunit protein uS15 (RPS13) from Glycine max (Soybean).